The sequence spans 213 residues: Adenylyl-sulfate kinase (213 aa).

A compositionally biased stretch (basic and acidic residues) spans 1–17; the sequence is MPAHQLDDHNQETRSDD. Residues 1–20 form a disordered region; it reads MPAHQLDDHNQETRSDDENI. 47-54 is an ATP binding site; that stretch reads GLSGSGKS. Ser-121 (phosphoserine intermediate) is an active-site residue.

The protein belongs to the APS kinase family.

It catalyses the reaction adenosine 5'-phosphosulfate + ATP = 3'-phosphoadenylyl sulfate + ADP + H(+). It participates in sulfur metabolism; hydrogen sulfide biosynthesis; sulfite from sulfate: step 2/3. Functionally, catalyzes the synthesis of activated sulfate. This Yersinia pestis protein is Adenylyl-sulfate kinase.